A 377-amino-acid polypeptide reads, in one-letter code: tRNA pseudouridine synthase B (377 aa).

Catalysis depends on aspartate 53, which acts as the Nucleophile.

It belongs to the pseudouridine synthase TruB family. Type 1 subfamily.

The enzyme catalyses uridine(55) in tRNA = pseudouridine(55) in tRNA. Responsible for synthesis of pseudouridine from uracil-55 in the psi GC loop of transfer RNAs. This is tRNA pseudouridine synthase B from Tropheryma whipplei (strain Twist) (Whipple's bacillus).